The sequence spans 120 residues: Large ribosomal subunit protein uL18 (120 aa).

This sequence belongs to the universal ribosomal protein uL18 family. Part of the 50S ribosomal subunit; part of the 5S rRNA/L5/L18/L25 subcomplex. Contacts the 5S and 23S rRNAs.

Functionally, this is one of the proteins that bind and probably mediate the attachment of the 5S RNA into the large ribosomal subunit, where it forms part of the central protuberance. The polypeptide is Large ribosomal subunit protein uL18 (Rhizobium etli (strain ATCC 51251 / DSM 11541 / JCM 21823 / NBRC 15573 / CFN 42)).